The following is a 340-amino-acid chain: Ferrochelatase (340 aa).

Fe cation is bound by residues histidine 202 and glutamate 283.

Belongs to the ferrochelatase family.

It localises to the cytoplasm. The catalysed reaction is heme b + 2 H(+) = protoporphyrin IX + Fe(2+). It participates in porphyrin-containing compound metabolism; protoheme biosynthesis; protoheme from protoporphyrin-IX: step 1/1. Its function is as follows. Catalyzes the ferrous insertion into protoporphyrin IX. This is Ferrochelatase from Acinetobacter baylyi (strain ATCC 33305 / BD413 / ADP1).